Reading from the N-terminus, the 79-residue chain is uncharacterized protein (79 aa).

Residues 1 to 19 (MKYVALAFVLSLVILQISA) form the signal peptide. The tract at residues 52 to 71 (RGRKSRTQSGRNQGKSTSDS) is disordered. Residues 58–71 (TQSGRNQGKSTSDS) are compositionally biased toward polar residues.

In terms of tissue distribution, nacreous layer of shell (at protein level). Expressed primarily in the mantle with highest level in the mantle pallium and lower level in the mantle edge.

The protein localises to the secreted. This is an uncharacterized protein from Margaritifera margaritifera (Freshwater pearl mussel).